The chain runs to 233 residues: uncharacterized protein (233 aa).

Transmembrane regions (helical) follow at residues Phe78–Tyr98, Phe113–Leu133, and Phe188–Ile208.

The protein resides in the membrane. This is an uncharacterized protein from Saccharomyces cerevisiae (strain ATCC 204508 / S288c) (Baker's yeast).